The sequence spans 185 residues: Ribosome-recycling factor (185 aa).

The protein belongs to the RRF family.

It localises to the cytoplasm. Responsible for the release of ribosomes from messenger RNA at the termination of protein biosynthesis. May increase the efficiency of translation by recycling ribosomes from one round of translation to another. The sequence is that of Ribosome-recycling factor from Streptococcus pyogenes serotype M18 (strain MGAS8232).